A 686-amino-acid polypeptide reads, in one-letter code: Translation initiation factor IF-2 (686 aa).

The disordered stretch occupies residues 61–98 (FEVEEKVVRSKKNSNKKKKKGKGNEDKRQENFAGRQQT). Over residues 69–81 (RSKKNSNKKKKKG) the composition is skewed to basic residues. A tr-type G domain is found at 188–357 (ERPAVVTIMG…LLVSEVEEYK (170 aa)). A G1 region spans residues 197–204 (GHVDHGKT). 197–204 (GHVDHGKT) provides a ligand contact to GTP. The interval 222-226 (GITQH) is G2. Residues 243–246 (DTPG) are G3. GTP contacts are provided by residues 243–247 (DTPGH) and 297–300 (NKMD). The tract at residues 297–300 (NKMD) is G4. The G5 stretch occupies residues 333-335 (SAI).

This sequence belongs to the TRAFAC class translation factor GTPase superfamily. Classic translation factor GTPase family. IF-2 subfamily.

It is found in the cytoplasm. Its function is as follows. One of the essential components for the initiation of protein synthesis. Protects formylmethionyl-tRNA from spontaneous hydrolysis and promotes its binding to the 30S ribosomal subunits. Also involved in the hydrolysis of GTP during the formation of the 70S ribosomal complex. This Bacillus cereus (strain B4264) protein is Translation initiation factor IF-2.